Here is a 381-residue protein sequence, read N- to C-terminus: Erythronate-4-phosphate dehydrogenase (381 aa).

Residues Ser-45 and Thr-67 each contribute to the substrate site. NAD(+) is bound by residues Asp-148, Ala-207–Arg-209, and Asp-233. Residue Arg-209 is part of the active site. Glu-238 is an active-site residue. His-255 (proton donor) is an active-site residue. Gly-258 contributes to the NAD(+) binding site.

The protein belongs to the D-isomer specific 2-hydroxyacid dehydrogenase family. PdxB subfamily. As to quaternary structure, homodimer.

The protein localises to the cytoplasm. It catalyses the reaction 4-phospho-D-erythronate + NAD(+) = (R)-3-hydroxy-2-oxo-4-phosphooxybutanoate + NADH + H(+). It functions in the pathway cofactor biosynthesis; pyridoxine 5'-phosphate biosynthesis; pyridoxine 5'-phosphate from D-erythrose 4-phosphate: step 2/5. Functionally, catalyzes the oxidation of erythronate-4-phosphate to 3-hydroxy-2-oxo-4-phosphonooxybutanoate. This Idiomarina loihiensis (strain ATCC BAA-735 / DSM 15497 / L2-TR) protein is Erythronate-4-phosphate dehydrogenase.